The following is a 331-amino-acid chain: CRISPR-associated endonuclease Cas1 (331 aa).

Mn(2+) is bound by residues Glu155, His221, and Glu236.

The protein belongs to the CRISPR-associated endonuclease Cas1 family. In terms of assembly, homodimer, forms a heterotetramer with a Cas2 homodimer. It depends on Mg(2+) as a cofactor. Mn(2+) is required as a cofactor.

Its function is as follows. CRISPR (clustered regularly interspaced short palindromic repeat), is an adaptive immune system that provides protection against mobile genetic elements (viruses, transposable elements and conjugative plasmids). CRISPR clusters contain spacers, sequences complementary to antecedent mobile elements, and target invading nucleic acids. CRISPR clusters are transcribed and processed into CRISPR RNA (crRNA). Acts as a dsDNA endonuclease. Involved in the integration of spacer DNA into the CRISPR cassette. This chain is CRISPR-associated endonuclease Cas1, found in Methanopyrus kandleri (strain AV19 / DSM 6324 / JCM 9639 / NBRC 100938).